The primary structure comprises 876 residues: Valine--tRNA ligase (876 aa).

Residues 44–54 carry the 'HIGH' region motif; sequence PNVTGKLHLGH. A 'KMSKS' region motif is present at residues 520 to 524; the sequence is KMSKS. K523 contacts ATP. Residues 805–876 are a coiled coil; that stretch reads LEGLIDMDKE…VKNRIEQLKA (72 aa).

The protein belongs to the class-I aminoacyl-tRNA synthetase family. ValS type 1 subfamily. As to quaternary structure, monomer.

The protein localises to the cytoplasm. The enzyme catalyses tRNA(Val) + L-valine + ATP = L-valyl-tRNA(Val) + AMP + diphosphate. Functionally, catalyzes the attachment of valine to tRNA(Val). As ValRS can inadvertently accommodate and process structurally similar amino acids such as threonine, to avoid such errors, it has a 'posttransfer' editing activity that hydrolyzes mischarged Thr-tRNA(Val) in a tRNA-dependent manner. This is Valine--tRNA ligase from Staphylococcus haemolyticus (strain JCSC1435).